The primary structure comprises 98 residues: Protein translation factor SUI1 homolog (98 aa).

This sequence belongs to the SUI1 family.

In Thermococcus kodakarensis (strain ATCC BAA-918 / JCM 12380 / KOD1) (Pyrococcus kodakaraensis (strain KOD1)), this protein is Protein translation factor SUI1 homolog.